A 257-amino-acid polypeptide reads, in one-letter code: Acyl-[acyl-carrier-protein]--UDP-N-acetylglucosamine O-acyltransferase (257 aa).

The protein belongs to the transferase hexapeptide repeat family. LpxA subfamily. As to quaternary structure, homotrimer.

The protein localises to the cytoplasm. It catalyses the reaction a (3R)-hydroxyacyl-[ACP] + UDP-N-acetyl-alpha-D-glucosamine = a UDP-3-O-[(3R)-3-hydroxyacyl]-N-acetyl-alpha-D-glucosamine + holo-[ACP]. The protein operates within glycolipid biosynthesis; lipid IV(A) biosynthesis; lipid IV(A) from (3R)-3-hydroxytetradecanoyl-[acyl-carrier-protein] and UDP-N-acetyl-alpha-D-glucosamine: step 1/6. Functionally, involved in the biosynthesis of lipid A, a phosphorylated glycolipid that anchors the lipopolysaccharide to the outer membrane of the cell. The sequence is that of Acyl-[acyl-carrier-protein]--UDP-N-acetylglucosamine O-acyltransferase from Fusobacterium nucleatum subsp. nucleatum (strain ATCC 25586 / DSM 15643 / BCRC 10681 / CIP 101130 / JCM 8532 / KCTC 2640 / LMG 13131 / VPI 4355).